A 668-amino-acid chain; its full sequence is tRNA 5-methylaminomethyl-2-thiouridine biosynthesis bifunctional protein MnmC (668 aa).

The segment at 1–245 (MKHYSIQPAN…KREMLCGVME (245 aa)) is tRNA (mnm(5)s(2)U34)-methyltransferase. The FAD-dependent cmnm(5)s(2)U34 oxidoreductase stretch occupies residues 270–668 (IGGGIASALL…LLKGKAVKAG (399 aa)).

The protein in the N-terminal section; belongs to the methyltransferase superfamily. tRNA (mnm(5)s(2)U34)-methyltransferase family. This sequence in the C-terminal section; belongs to the DAO family. It depends on FAD as a cofactor.

The protein resides in the cytoplasm. The enzyme catalyses 5-aminomethyl-2-thiouridine(34) in tRNA + S-adenosyl-L-methionine = 5-methylaminomethyl-2-thiouridine(34) in tRNA + S-adenosyl-L-homocysteine + H(+). Functionally, catalyzes the last two steps in the biosynthesis of 5-methylaminomethyl-2-thiouridine (mnm(5)s(2)U) at the wobble position (U34) in tRNA. Catalyzes the FAD-dependent demodification of cmnm(5)s(2)U34 to nm(5)s(2)U34, followed by the transfer of a methyl group from S-adenosyl-L-methionine to nm(5)s(2)U34, to form mnm(5)s(2)U34. In Shigella dysenteriae serotype 1 (strain Sd197), this protein is tRNA 5-methylaminomethyl-2-thiouridine biosynthesis bifunctional protein MnmC.